A 192-amino-acid polypeptide reads, in one-letter code: Peptidyl-tRNA hydrolase (192 aa).

TRNA is bound at residue Y18. Catalysis depends on H23, which acts as the Proton acceptor. 3 residues coordinate tRNA: F69, N71, and N117.

The protein belongs to the PTH family. Monomer.

Its subcellular location is the cytoplasm. The catalysed reaction is an N-acyl-L-alpha-aminoacyl-tRNA + H2O = an N-acyl-L-amino acid + a tRNA + H(+). Functionally, hydrolyzes ribosome-free peptidyl-tRNAs (with 1 or more amino acids incorporated), which drop off the ribosome during protein synthesis, or as a result of ribosome stalling. Its function is as follows. Catalyzes the release of premature peptidyl moieties from peptidyl-tRNA molecules trapped in stalled 50S ribosomal subunits, and thus maintains levels of free tRNAs and 50S ribosomes. The chain is Peptidyl-tRNA hydrolase from Neisseria meningitidis serogroup C (strain 053442).